The sequence spans 448 residues: Trk system potassium uptake protein TrkA homolog 2 (448 aa).

The RCK N-terminal 1 domain maps to 1-124; it reads MKAVVIGAGE…RAQVGVDIMI (124 aa). NAD(+) is bound by residues 7–11, Glu29, 70–71, and Arg101; these read GAGEV and TG. The 82-residue stretch at 144–225 folds into the RCK C-terminal 1 domain; the sequence is IDAEMFAGGK…MADLENVFGN (82 aa). The RCK N-terminal 2 domain maps to 230–348; the sequence is RNRILLIGCG…FEMVGIDIAV (119 aa). 232–262 is a binding site for NAD(+); that stretch reads RILLIGCGIVGFYLAKIIDKDENADLKVIEY. In terms of domain architecture, RCK C-terminal 2 spans 368 to 448; sequence EALATIEGEK…AVRSVEKLFK (81 aa).

Its function is as follows. Part of a potassium transport system. This is Trk system potassium uptake protein TrkA homolog 2 (trkA2) from Methanosarcina mazei (strain ATCC BAA-159 / DSM 3647 / Goe1 / Go1 / JCM 11833 / OCM 88) (Methanosarcina frisia).